A 406-amino-acid chain; its full sequence is Elongation factor Tu-A (406 aa).

The 206-residue stretch at 10–215 (KPHVNVGTIG…AIDEYIPTPV (206 aa)) folds into the tr-type G domain. The tract at residues 19-26 (GHVDHGKT) is G1. 19 to 26 (GHVDHGKT) contacts GTP. Residue threonine 26 coordinates Mg(2+). Residues 61–65 (GITIN) form a G2 region. Residues 82 to 85 (DCPG) are G3. Residues 82–86 (DCPGH) and 137–140 (NKVD) each bind GTP. The G4 stretch occupies residues 137 to 140 (NKVD). A G5 region spans residues 175–177 (SAL). Residue threonine 395 is modified to Phosphothreonine.

Belongs to the TRAFAC class translation factor GTPase superfamily. Classic translation factor GTPase family. EF-Tu/EF-1A subfamily. Monomer. Binds to the 70S ribosome, contacts tmRNA during trans-translation. Phosphorylated on a threonine.

The protein localises to the cytoplasm. It carries out the reaction GTP + H2O = GDP + phosphate + H(+). GTP hydrolase that promotes the GTP-dependent binding of aminoacyl-tRNA to the A-site of ribosomes during protein biosynthesis. Functionally, EF-Tu-GDP binds to the acceptor arm of tmRNA by interacting with its acceptor arm, suggesting that GTP hydrolysis by EF-Tu is essential for tmRNA function. Its function is as follows. Protects glycyl-tRNA(Gly) from hydrolysis by E.coli D-aminoacyl-tRNA deacylase (dtd). This is Elongation factor Tu-A from Thermus thermophilus (strain ATCC 27634 / DSM 579 / HB8).